Here is a 186-residue protein sequence, read N- to C-terminus: Probable chorismate pyruvate-lyase (186 aa).

Positions 80, 118, and 170 each coordinate substrate.

This sequence belongs to the UbiC family.

It is found in the cytoplasm. The catalysed reaction is chorismate = 4-hydroxybenzoate + pyruvate. The protein operates within cofactor biosynthesis; ubiquinone biosynthesis. Removes the pyruvyl group from chorismate, with concomitant aromatization of the ring, to provide 4-hydroxybenzoate (4HB) for the ubiquinone pathway. The sequence is that of Probable chorismate pyruvate-lyase from Pseudomonas savastanoi pv. phaseolicola (strain 1448A / Race 6) (Pseudomonas syringae pv. phaseolicola (strain 1448A / Race 6)).